The chain runs to 687 residues: Leucine-rich repeat and fibronectin type III domain-containing protein 1-like protein (687 aa).

Residues 1–17 (MEWLIFSLLLLAVSASG) form the signal peptide. Residues 18–51 (QLCPKRCMCQNLSPSLAILCAKTGLLFVPTVIDR) form the LRRNT domain. Residues 18 to 527 (QLCPKRCMCQ…LRSHFLGGTM (510 aa)) lie on the Extracellular side of the membrane. LRR repeat units follow at residues 52-73 (RTVELRLTENFITAVKRRDFAN), 76-97 (SLLHLTLSRNTISQIMPYTFAD), 100-121 (RLRALHLDSNRLSVITDDHFRG), 124-145 (NLRHLILANNQLHNISPHAFDD), 149-170 (TLEDLDLSYNNLVDIPWDTIGR), 173-194 (NVNTLNMDHNLIEHVPLGIFSN), and 197-218 (KLARLDMTSNKLKKIPPDPLFL). Asn73 carries N-linked (GlcNAc...) asparagine glycosylation. Residues 241 to 287 (NPLHCNCELLWLRRLTREDDLETCASPPDLTAKYFWTIPEEEFICDP) enclose the LRRCT domain. Positions 287 to 376 (PPVITRKSPK…STGTVELVVS (90 aa)) constitute an Ig-like domain. A disulfide bond links Cys309 and Cys358. 6 N-linked (GlcNAc...) asparagine glycosylation sites follow: Asn331, Asn340, Asn346, Asn383, Asn410, and Asn450. Residues 384-412 (STNRIREPDPGPSDILTSAKSTSSVSNET) form a disordered region. Polar residues predominate over residues 398 to 412 (ILTSAKSTSSVSNET). In terms of domain architecture, Fibronectin type-III spans 415–510 (QERKVVLAEL…VGCVTFVTET (96 aa)). Residues 528–548 (IIIIGGIIVASVLVFIIILMI) traverse the membrane as a helical segment. Residues 549–687 (RYKVYSQHGA…AQRDWSDFKI (139 aa)) are Cytoplasmic-facing. Disordered stretches follow at residues 563–601 (GTAMTNVRSQTNGGQAAGQVPRSSSKIVEGQEASGGSLG) and 630–687 (EDIV…DFKI). Composition is skewed to polar residues over residues 565-576 (AMTNVRSQTNGG) and 657-672 (EGTSSDTQEDTASPQV). The span at 673–687 (SDEKKAQRDWSDFKI) shows a compositional bias: basic and acidic residues.

The protein belongs to the LRFN family.

It localises to the membrane. The protein resides in the synapse. May be involved in the regulation of excitatory synapses. The protein is Leucine-rich repeat and fibronectin type III domain-containing protein 1-like protein (lrfn1l) of Danio rerio (Zebrafish).